A 621-amino-acid chain; its full sequence is Glutathione-regulated potassium-efflux system protein KefC (621 aa).

The next 12 membrane-spanning stretches (helical) occupy residues 9–29 (ALIY…LGLG), 30–50 (SVLG…RLVN), 54–74 (AILH…GLEL), 90–110 (GALQ…LLGL), 114–134 (VAEL…MQAM), 149–169 (FAVL…IPLL), 178–198 (LMAF…VVVL), 232–252 (LLLE…GVLL), 270–290 (GLLL…APWS), 296–316 (IVIL…LIAQ), 326–346 (RWFA…FGPA), and 359–379 (ALTL…VLLT). The region spanning 399–518 (QPRVIVAGFG…AGVEAPERET (120 aa)) is the RCK N-terminal domain. A disordered region spans residues 598 to 621 (GWQGTEEGRHTGDIADEPENKPSA).

Belongs to the monovalent cation:proton antiporter 2 (CPA2) transporter (TC 2.A.37) family. KefC subfamily. In terms of assembly, homodimer. Interacts with the regulatory subunit KefF.

It is found in the cell inner membrane. Its function is as follows. Pore-forming subunit of a potassium efflux system that confers protection against electrophiles. Catalyzes K(+)/H(+) antiport. This Klebsiella aerogenes (Enterobacter aerogenes) protein is Glutathione-regulated potassium-efflux system protein KefC.